Reading from the N-terminus, the 301-residue chain is uncharacterized protein (301 aa).

Disordered regions lie at residues 56–126 and 149–173; these read ESPT…ESDL and LSTE…DASS. Positions 71–82 are enriched in basic and acidic residues; the sequence is VQKENQKPKDLN. The segment covering 93-102 has biased composition (polar residues); the sequence is KNSSGLVSQI. Residues 161-173 are compositionally biased toward low complexity; sequence SNTSSSSMSDASS.

This is an uncharacterized protein from Caenorhabditis elegans.